A 115-amino-acid polypeptide reads, in one-letter code: Tyrosine-protein phosphatase 21 (115 aa).

One can recognise a Tyrosine-protein phosphatase domain in the interval 1–115 (WLMIVEKECR…EIGGDAPMVV (115 aa)). Substrate is bound at residue Asp-83.

Belongs to the protein-tyrosine phosphatase family.

The catalysed reaction is O-phospho-L-tyrosyl-[protein] + H2O = L-tyrosyl-[protein] + phosphate. The chain is Tyrosine-protein phosphatase 21 (STY-21) from Styela plicata (Wrinkled sea squirt).